A 163-amino-acid polypeptide reads, in one-letter code: Lysosomal enzyme trafficking factor (163 aa).

2 helical membrane passes run 40–60 and 98–118; these read MGWI…YYVF and LPFW…FLFL.

The protein belongs to the LYSET family. Interacts with GNPTAB; this interaction is important for proper localization of GNPTAB in Golgi stacks. Interacts with MBTPS1.

The protein resides in the golgi apparatus membrane. In terms of biological role, required for mannose-6-phosphate-dependent trafficking of lysosomal enzymes. LYSET bridges GlcNAc-1-phosphate transferase (GNPTAB), to the membrane-bound transcription factor site-1 protease (MBTPS1), thus allowing proteolytic activation of the GNPTAB. GNPTAB is involved in the regulation of M6P-dependent Golgi-to-lysosome trafficking of lysosomal enzymes. LYSET is thus an essential factor for maturation and delivery of lysosomal hydrolases. Its function is as follows. (Microbial infection) Essential for infection by muliple viruses, including SARS-CoV-2, that utilize activated cathepsins for entry after M6P-dependent lysosomal transport. The sequence is that of Lysosomal enzyme trafficking factor from Homo sapiens (Human).